Reading from the N-terminus, the 88-residue chain is MGSLRVSTVVIAVVACLSILLISPTEVDGRLVCDTPAGTCTSSSTCNDQCNTWGGNYSGGECADSSFPGLSICYCCHYVGSSAEMESM.

The N-terminal stretch at 1–29 is a signal peptide; it reads MGSLRVSTVVIAVVACLSILLISPTEVDG. 4 disulfide bridges follow: cysteine 33–cysteine 76, cysteine 40–cysteine 62, cysteine 46–cysteine 73, and cysteine 50–cysteine 75.

This sequence belongs to the DEFL family.

It localises to the secreted. The protein is Defensin-like protein 98 of Arabidopsis thaliana (Mouse-ear cress).